We begin with the raw amino-acid sequence, 109 residues long: MNPALGNQTDVAGLFLANSSEALERAVRCCTQASVVTDDGFAEGGPDERSLYIMRVVQIAVMCVLSLTVVFGIFFLGCNLLIKSEGMINFLVKDRRPSKEVEAVVVGPY.

Residues Asn7 and Asn18 are each glycosylated (N-linked (GlcNAc...) asparagine). Residues 56 to 76 (VVQIAVMCVLSLTVVFGIFFL) traverse the membrane as a helical segment. Ser98 is modified (phosphoserine).

This sequence belongs to the reprimo family.

The protein resides in the cytoplasm. The protein localises to the membrane. Functionally, may be involved in the regulation of p53-dependent G2 arrest of the cell cycle. Seems to induce cell cycle arrest by inhibiting CDK1 activity and nuclear translocation of the CDC2 cyclin B1 complex. This chain is Protein reprimo (RPRM), found in Homo sapiens (Human).